Reading from the N-terminus, the 300-residue chain is Protein SPEAR4 (300 aa).

Polar residues predominate over residues 1–10 (MCSKTSSVSY). The segment at 1-45 (MCSKTSSVSYGNREDDDNYSSLCPKKQKHNNGGKKRVPRRGPGVA) is disordered. A compositionally biased stretch (basic residues) spans 25-39 (KKQKHNNGGKKRVPR). An SPL motif is present at residues 40–48 (RGPGVAELE). The short motif at 294–300 (IDLRLKL) is the EAR element.

As to quaternary structure, interacts with SPL and SPEAR2. In terms of tissue distribution, expressed in leaves.

Its function is as follows. Adapter-like transcriptional repressor recruiting TPL/TPR coepressors to inhibit TCP transcription factors. May be involved in leaf development. The sequence is that of Protein SPEAR4 from Arabidopsis thaliana (Mouse-ear cress).